A 234-amino-acid polypeptide reads, in one-letter code: N-(5'-phosphoribosyl)anthranilate isomerase (234 aa).

Positions 211 to 234 are disordered; sequence RAASSSPRPVDGESPAFQRSEKAG.

Belongs to the TrpF family.

It carries out the reaction N-(5-phospho-beta-D-ribosyl)anthranilate = 1-(2-carboxyphenylamino)-1-deoxy-D-ribulose 5-phosphate. It participates in amino-acid biosynthesis; L-tryptophan biosynthesis; L-tryptophan from chorismate: step 3/5. In Afipia carboxidovorans (strain ATCC 49405 / DSM 1227 / KCTC 32145 / OM5) (Oligotropha carboxidovorans), this protein is N-(5'-phosphoribosyl)anthranilate isomerase.